Here is a 243-residue protein sequence, read N- to C-terminus: Probable transcriptional regulatory protein LSEI_1022 (243 aa).

The interval 1-23 (MSGHSKWHNIQGRKNAQDSKRGK) is disordered.

It belongs to the TACO1 family.

It is found in the cytoplasm. The protein is Probable transcriptional regulatory protein LSEI_1022 of Lacticaseibacillus paracasei (strain ATCC 334 / BCRC 17002 / CCUG 31169 / CIP 107868 / KCTC 3260 / NRRL B-441) (Lactobacillus paracasei).